The sequence spans 348 residues: Major outer membrane protein (348 aa).

The first 20 residues, 1–20, serve as a signal peptide directing secretion; that stretch reads MKKTIVALAVAAVAATSANA.

Disulfide bond interactions within and between MOMP molecules and other components form high molecular-weight oligomers.

The protein localises to the cell outer membrane. Structural rigidity of the outer membrane of elementary bodies and porin forming, permitting diffusion of solutes through the intracellular reticulate body membrane. The sequence is that of Major outer membrane protein (ompH) from Pasteurella multocida (strain Pm70).